A 384-amino-acid chain; its full sequence is S-adenosylmethionine synthase (384 aa).

Histidine 15 lines the ATP pocket. A Mg(2+)-binding site is contributed by aspartate 17. Residue glutamate 43 coordinates K(+). Positions 56 and 99 each coordinate L-methionine. The interval 99–109 (QSPDINQGVDR) is flexible loop. Residues 164-166 (DAK), 230-231 (RF), aspartate 239, 245-246 (RK), alanine 262, and lysine 266 each bind ATP. Position 239 (aspartate 239) interacts with L-methionine. An L-methionine-binding site is contributed by lysine 270.

This sequence belongs to the AdoMet synthase family. Homotetramer; dimer of dimers. Mg(2+) is required as a cofactor. Requires K(+) as cofactor.

It localises to the cytoplasm. It catalyses the reaction L-methionine + ATP + H2O = S-adenosyl-L-methionine + phosphate + diphosphate. It participates in amino-acid biosynthesis; S-adenosyl-L-methionine biosynthesis; S-adenosyl-L-methionine from L-methionine: step 1/1. Functionally, catalyzes the formation of S-adenosylmethionine (AdoMet) from methionine and ATP. The overall synthetic reaction is composed of two sequential steps, AdoMet formation and the subsequent tripolyphosphate hydrolysis which occurs prior to release of AdoMet from the enzyme. The protein is S-adenosylmethionine synthase of Erwinia tasmaniensis (strain DSM 17950 / CFBP 7177 / CIP 109463 / NCPPB 4357 / Et1/99).